The chain runs to 926 residues: UvrABC system protein A (926 aa).

31 to 38 (GPSGSGKS) is a binding site for ATP. Residues 251 to 278 (CPEHGFSIPELSARLFSFNSPYGACPSC) form a C4-type zinc finger. ABC transporter domains lie at 308 to 568 (SGYF…PSSL) and 588 to 916 (PSGK…KYLR). 620–627 (GVSGSGKS) contacts ATP. The segment at 719–745 (CEACQGEGVIKVEMHFLPPVYVTCEVC) adopts a C4-type zinc-finger fold.

It belongs to the ABC transporter superfamily. UvrA family. Forms a heterotetramer with UvrB during the search for lesions.

Its subcellular location is the cytoplasm. Functionally, the UvrABC repair system catalyzes the recognition and processing of DNA lesions. UvrA is an ATPase and a DNA-binding protein. A damage recognition complex composed of 2 UvrA and 2 UvrB subunits scans DNA for abnormalities. When the presence of a lesion has been verified by UvrB, the UvrA molecules dissociate. The protein is UvrABC system protein A of Aquifex aeolicus (strain VF5).